Here is a 150-residue protein sequence, read N- to C-terminus: 3-dehydroquinate dehydratase (150 aa).

Residue Tyr26 is the Proton acceptor of the active site. Positions 77, 83, and 90 each coordinate substrate. The Proton donor role is filled by His103. Substrate-binding positions include 104–105 (LS) and Arg114.

This sequence belongs to the type-II 3-dehydroquinase family. In terms of assembly, homododecamer.

It carries out the reaction 3-dehydroquinate = 3-dehydroshikimate + H2O. The protein operates within metabolic intermediate biosynthesis; chorismate biosynthesis; chorismate from D-erythrose 4-phosphate and phosphoenolpyruvate: step 3/7. Functionally, catalyzes a trans-dehydration via an enolate intermediate. In Yersinia pseudotuberculosis serotype O:1b (strain IP 31758), this protein is 3-dehydroquinate dehydratase.